The primary structure comprises 156 residues: Transcription elongation factor GreA (156 aa).

The stretch at 6 to 75 (IYLTKEGYEK…ELENMLSKAE (70 aa)) forms a coiled coil.

The protein belongs to the GreA/GreB family.

Necessary for efficient RNA polymerase transcription elongation past template-encoded arresting sites. The arresting sites in DNA have the property of trapping a certain fraction of elongating RNA polymerases that pass through, resulting in locked ternary complexes. Cleavage of the nascent transcript by cleavage factors such as GreA or GreB allows the resumption of elongation from the new 3'terminus. GreA releases sequences of 2 to 3 nucleotides. This Thermosipho africanus (strain TCF52B) protein is Transcription elongation factor GreA.